The primary structure comprises 263 residues: 4'-phosphopantetheinyl transferase pptA (263 aa).

The protein belongs to the P-Pant transferase superfamily.

It carries out the reaction apo-[ACP] + CoA = holo-[ACP] + adenosine 3',5'-bisphosphate + H(+). Its function is as follows. Transfers the 4'-phosphopantetheine moiety from coenzyme A to a Ser of an acyl-carrier-protein. Activates the peptidyl carrier protein (PCP) domains of surfactin synthas. In Paxillus involutus (Naked brimcap), this protein is 4'-phosphopantetheinyl transferase pptA (pptA).